We begin with the raw amino-acid sequence, 274 residues long: Thiamine kinase (274 aa).

Belongs to the thiamine kinase family.

It carries out the reaction thiamine + ATP = thiamine phosphate + ADP + H(+). The protein operates within cofactor biosynthesis; thiamine diphosphate biosynthesis; thiamine phosphate from thiamine: step 1/1. Functionally, catalyzes the ATP-dependent phosphorylation of thiamine to thiamine phosphate. Is involved in thiamine salvage. This Salmonella dublin (strain CT_02021853) protein is Thiamine kinase.